The following is a 278-amino-acid chain: Cell division protein FtsQ (278 aa).

Residues 1 to 6 (MNATLR) are Cytoplasmic-facing. Residues 7–27 (ILAWLIAVALVALPVVAVLNG) form a helical membrane-spanning segment. The Periplasmic portion of the chain corresponds to 28–278 (WVGAERWPLA…SPFAIPGFKT (251 aa)). The region spanning 34–103 (WPLARLRVSG…DVLEVHVVEH (70 aa)) is the POTRA domain.

The protein belongs to the FtsQ/DivIB family. FtsQ subfamily. As to quaternary structure, part of a complex composed of FtsB, FtsL and FtsQ.

Its subcellular location is the cell inner membrane. Essential cell division protein. May link together the upstream cell division proteins, which are predominantly cytoplasmic, with the downstream cell division proteins, which are predominantly periplasmic. May control correct divisome assembly. This chain is Cell division protein FtsQ, found in Xanthomonas campestris pv. campestris (strain ATCC 33913 / DSM 3586 / NCPPB 528 / LMG 568 / P 25).